Reading from the N-terminus, the 225-residue chain is Cell division protein SepF (225 aa).

Residues 22–116 (EYLDEPEPAR…TRGALAVDTR (95 aa)) are disordered. Composition is skewed to basic and acidic residues over residues 28 to 54 (EPAR…RDFA) and 77 to 86 (RYDGPRHSSR).

Belongs to the SepF family. As to quaternary structure, homodimer. Interacts with FtsZ.

It is found in the cytoplasm. Functionally, cell division protein that is part of the divisome complex and is recruited early to the Z-ring. Probably stimulates Z-ring formation, perhaps through the cross-linking of FtsZ protofilaments. Its function overlaps with FtsA. The chain is Cell division protein SepF from Rhodococcus jostii (strain RHA1).